The sequence spans 20 residues: Short cationic peptide-4d (20 aa).

Residue E20 is modified to Glutamic acid 1-amide.

As to expression, expressed by the venom gland.

The protein localises to the secreted. In Cupiennius salei (American wandering spider), this protein is Short cationic peptide-4d.